The sequence spans 261 residues: tRNA U34 carboxymethyltransferase (261 aa).

Carboxy-S-adenosyl-L-methionine-binding positions include K25, W39, K44, G63, 114-115 (VE), Y135, and R250.

It belongs to the class I-like SAM-binding methyltransferase superfamily. CmoB family. As to quaternary structure, homotetramer.

The catalysed reaction is carboxy-S-adenosyl-L-methionine + 5-hydroxyuridine(34) in tRNA = 5-carboxymethoxyuridine(34) in tRNA + S-adenosyl-L-homocysteine + H(+). Catalyzes carboxymethyl transfer from carboxy-S-adenosyl-L-methionine (Cx-SAM) to 5-hydroxyuridine (ho5U) to form 5-carboxymethoxyuridine (cmo5U) at position 34 in tRNAs. This chain is tRNA U34 carboxymethyltransferase, found in Helicobacter pylori (strain J99 / ATCC 700824) (Campylobacter pylori J99).